Here is a 160-residue protein sequence, read N- to C-terminus: Zinc finger A20 and AN1 domain-containing stress-associated protein 5 (160 aa).

Residues 20–54 form an A20-type zinc finger; the sequence is TTTTTLCTNNCGVTANPATNNMCQKCFNASLVSAA. Positions 26, 30, 42, 45, 101, 104, 115, 117, 122, 125, 131, and 133 each coordinate Zn(2+). The AN1-type zinc finger occupies 95 to 141; sequence QQIVNRCSGCRKKVGLTGFRCRCGELFCSEHRYSDRHDCSYDYKTAG.

May be involved in environmental stress response. The polypeptide is Zinc finger A20 and AN1 domain-containing stress-associated protein 5 (SAP5) (Arabidopsis thaliana (Mouse-ear cress)).